Here is a 248-residue protein sequence, read N- to C-terminus: 2,3-bisphosphoglycerate-dependent phosphoglycerate mutase (248 aa).

Residues 8–15 (RHGESTWN), 21–22 (TG), Arg60, 87–90 (ERHY), Lys98, 114–115 (RR), and 183–184 (GN) contribute to the substrate site. His9 serves as the catalytic Tele-phosphohistidine intermediate. The active-site Proton donor/acceptor is the Glu87.

The protein belongs to the phosphoglycerate mutase family. BPG-dependent PGAM subfamily. As to quaternary structure, homodimer.

It catalyses the reaction (2R)-2-phosphoglycerate = (2R)-3-phosphoglycerate. It participates in carbohydrate degradation; glycolysis; pyruvate from D-glyceraldehyde 3-phosphate: step 3/5. Its function is as follows. Catalyzes the interconversion of 2-phosphoglycerate and 3-phosphoglycerate. The protein is 2,3-bisphosphoglycerate-dependent phosphoglycerate mutase of Paraburkholderia phymatum (strain DSM 17167 / CIP 108236 / LMG 21445 / STM815) (Burkholderia phymatum).